Consider the following 276-residue polypeptide: Phosphonoacetaldehyde hydrolase (276 aa).

Asp19 functions as the Nucleophile in the catalytic mechanism. Mg(2+)-binding residues include Asp19 and Ala21. The active-site Schiff-base intermediate with substrate is the Lys60. Residue Asp193 participates in Mg(2+) binding.

Belongs to the HAD-like hydrolase superfamily. PhnX family. Homodimer. It depends on Mg(2+) as a cofactor.

It carries out the reaction phosphonoacetaldehyde + H2O = acetaldehyde + phosphate + H(+). Functionally, involved in phosphonate degradation. In Bordetella bronchiseptica (strain ATCC BAA-588 / NCTC 13252 / RB50) (Alcaligenes bronchisepticus), this protein is Phosphonoacetaldehyde hydrolase.